Here is a 90-residue protein sequence, read N- to C-terminus: RNA-binding protein Hfq (90 aa).

The Sm domain occupies Asp10–Leu70.

The protein belongs to the Hfq family. As to quaternary structure, homohexamer.

In terms of biological role, RNA chaperone that binds small regulatory RNA (sRNAs) and mRNAs to facilitate mRNA translational regulation in response to envelope stress, environmental stress and changes in metabolite concentrations. Also binds with high specificity to tRNAs. The sequence is that of RNA-binding protein Hfq from Symbiobacterium thermophilum (strain DSM 24528 / JCM 14929 / IAM 14863 / T).